A 577-amino-acid chain; its full sequence is Arginine--tRNA ligase (577 aa).

Positions 132-142 (ANPTGPLHVGH) match the 'HIGH' region motif.

This sequence belongs to the class-I aminoacyl-tRNA synthetase family. In terms of assembly, monomer.

Its subcellular location is the cytoplasm. It catalyses the reaction tRNA(Arg) + L-arginine + ATP = L-arginyl-tRNA(Arg) + AMP + diphosphate. This is Arginine--tRNA ligase from Pelagibacter ubique (strain HTCC1062).